We begin with the raw amino-acid sequence, 270 residues long: Protein-ADP-ribose hydrolase (270 aa).

The 195-residue stretch at 73–267 (VSVKDCQKTN…LYDTYLQKEN (195 aa)) folds into the Macro domain. Aspartate 92, isoleucine 93, and asparagine 106 together coordinate ADP-D-ribose. Residues cysteine 112, histidine 117, and cysteine 119 each contribute to the Zn(2+) site. The ADP-D-ribose site is built by cysteine 119, isoleucine 120, aspartate 121, serine 212, threonine 213, glycine 214, glutamate 215, and phenylalanine 216.

It belongs to the MacroD-type family. Zn-Macro subfamily. Zn(2+) serves as cofactor.

It carries out the reaction 4-O-(ADP-D-ribosyl)-L-aspartyl-[protein] + H2O = L-aspartyl-[protein] + ADP-D-ribose + H(+). ADP-ribosylhydrolase that specifically reverses the SirTM-mediated mono-ADP-ribosylation at an asparatate residue of GcvH-L, by releasing ADP-ribose from the target protein. May play a role in the regulation of the response to host-induced oxidative stress. The protein is Protein-ADP-ribose hydrolase of Streptococcus pyogenes serotype M3 (strain ATCC BAA-595 / MGAS315).